The chain runs to 290 residues: Proteasome subunit beta (290 aa).

Residues 1–58 constitute a propeptide, removed in mature form; by autocatalysis; sequence MTTSGGLTGPGAFGRLPQPFHQPGITSFVEFLALQAPDLLPGRLQMPAGGQPPEVPHG. Threonine 59 serves as the catalytic Nucleophile.

The protein belongs to the peptidase T1B family. In terms of assembly, the 20S proteasome core is composed of 14 alpha and 14 beta subunits that assemble into four stacked heptameric rings, resulting in a barrel-shaped structure. The two inner rings, each composed of seven catalytic beta subunits, are sandwiched by two outer rings, each composed of seven alpha subunits. The catalytic chamber with the active sites is on the inside of the barrel. Has a gated structure, the ends of the cylinder being occluded by the N-termini of the alpha-subunits. Is capped by the proteasome-associated ATPase, ARC.

The protein resides in the cytoplasm. The catalysed reaction is Cleavage of peptide bonds with very broad specificity.. Its pathway is protein degradation; proteasomal Pup-dependent pathway. With respect to regulation, the formation of the proteasomal ATPase ARC-20S proteasome complex, likely via the docking of the C-termini of ARC into the intersubunit pockets in the alpha-rings, may trigger opening of the gate for substrate entry. Interconversion between the open-gate and close-gate conformations leads to a dynamic regulation of the 20S proteasome proteolysis activity. Its function is as follows. Component of the proteasome core, a large protease complex with broad specificity involved in protein degradation. This Acidothermus cellulolyticus (strain ATCC 43068 / DSM 8971 / 11B) protein is Proteasome subunit beta.